Consider the following 590-residue polypeptide: Asparagine synthetase [glutamine-hydrolyzing] (590 aa).

The active-site For GATase activity is the Cys-2. One can recognise a Glutamine amidotransferase type-2 domain in the interval 2 to 185; sequence CGILAVLGCS…PGNLYSSRSG (184 aa). L-glutamine-binding positions include 50–54, 75–77, and Asp-98; these read RLAII and NGE. Residues 193–516 enclose the Asparagine synthetase domain; the sequence is PQWYNETIPS…PQNSARFTVP (324 aa). ATP contacts are provided by residues Leu-231, Val-267, and 341 to 342; that span reads SG.

The catalysed reaction is L-aspartate + L-glutamine + ATP + H2O = L-asparagine + L-glutamate + AMP + diphosphate + H(+). It participates in amino-acid biosynthesis; L-asparagine biosynthesis; L-asparagine from L-aspartate (L-Gln route): step 1/1. In Asparagus officinalis (Garden asparagus), this protein is Asparagine synthetase [glutamine-hydrolyzing].